The sequence spans 390 residues: 8-amino-7-oxononanoate synthase (390 aa).

Position 19 (arginine 19) interacts with substrate. Residue 106-107 (GY) coordinates pyridoxal 5'-phosphate. Substrate is bound at residue histidine 131. 3 residues coordinate pyridoxal 5'-phosphate: serine 176, histidine 204, and threonine 233. Lysine 236 bears the N6-(pyridoxal phosphate)lysine mark. Residue threonine 350 participates in substrate binding.

This sequence belongs to the class-II pyridoxal-phosphate-dependent aminotransferase family. BioF subfamily. In terms of assembly, homodimer. The cofactor is pyridoxal 5'-phosphate.

The catalysed reaction is 6-carboxyhexanoyl-[ACP] + L-alanine + H(+) = (8S)-8-amino-7-oxononanoate + holo-[ACP] + CO2. It participates in cofactor biosynthesis; biotin biosynthesis. Its function is as follows. Catalyzes the decarboxylative condensation of pimeloyl-[acyl-carrier protein] and L-alanine to produce 8-amino-7-oxononanoate (AON), [acyl-carrier protein], and carbon dioxide. The chain is 8-amino-7-oxononanoate synthase from Pseudomonas putida (strain W619).